Consider the following 481-residue polypeptide: Aspartyl/glutamyl-tRNA(Asn/Gln) amidotransferase subunit B (481 aa).

Belongs to the GatB/GatE family. GatB subfamily. As to quaternary structure, heterotrimer of A, B and C subunits.

It catalyses the reaction L-glutamyl-tRNA(Gln) + L-glutamine + ATP + H2O = L-glutaminyl-tRNA(Gln) + L-glutamate + ADP + phosphate + H(+). The catalysed reaction is L-aspartyl-tRNA(Asn) + L-glutamine + ATP + H2O = L-asparaginyl-tRNA(Asn) + L-glutamate + ADP + phosphate + 2 H(+). Its function is as follows. Allows the formation of correctly charged Asn-tRNA(Asn) or Gln-tRNA(Gln) through the transamidation of misacylated Asp-tRNA(Asn) or Glu-tRNA(Gln) in organisms which lack either or both of asparaginyl-tRNA or glutaminyl-tRNA synthetases. The reaction takes place in the presence of glutamine and ATP through an activated phospho-Asp-tRNA(Asn) or phospho-Glu-tRNA(Gln). The chain is Aspartyl/glutamyl-tRNA(Asn/Gln) amidotransferase subunit B from Ehrlichia chaffeensis (strain ATCC CRL-10679 / Arkansas).